The sequence spans 108 residues: UPF0060 membrane protein Mfla_0485 (108 aa).

4 helical membrane passes run 7–27, 33–53, 63–83, and 87–107; these read FSLFILTALAEILGCYLPYLW, SVWLLLPAAISLAVFAWLLSL, AAYGGVYIFVALGWLWLVDGI, and TWDFVGVGVALAGMAIIMFAP.

Belongs to the UPF0060 family.

The protein localises to the cell inner membrane. The sequence is that of UPF0060 membrane protein Mfla_0485 from Methylobacillus flagellatus (strain ATCC 51484 / DSM 6875 / VKM B-1610 / KT).